The sequence spans 449 residues: Packaging protein 1 (449 aa).

The tract at residues 1–77 is disordered; it reads METRGRRPAA…QPAKRGDMLD (77 aa). Residue 171–178 coordinates ATP; sequence GPTGCGKS. A DNA-binding region spans residues 440–449; sequence RAYRARKTPK.

It belongs to the adenoviridae packaging protein 1 family. In terms of assembly, homodimer. Part of a genome packaging complex composed of packaging proteins 1, 2 and 3; this complex specifically binds to the packaging sequence on the left end of viral genomic DNA and performs packaging of the viral genome. Interacts with protein 33K.

It is found in the virion. The protein resides in the host nucleus. It localises to the host nucleoplasm. The protein localises to the host nucleolus. Its function is as follows. Component of the packaging machinery which encapsidates the viral DNA into preformed capsids and transcriptional activator of the viral major late promoter (MLP). Binds, along with packaging proteins 2 and 3, to the specific packaging sequence on the left end of viral genomic DNA and displays ATPase activity thereby providing the power stroke of the packaging machinery. The activity of packaging protein IVa2 is stimulated by protein 33K which acts as a terminase. May be the protein that pumps DNA into the capsid powered by ATP hydrolysis. Specifically binds to the 5'-CG-3' nucleotides of the repeats making up the packaging sequence. Component of the DEF-A and DEF-B transcription factors that bind downstream elements of the major late promoter (MLP), and stimulate transcription from the MLP after initiation of viral DNA replication. DEF-A is a heterodimer packaging proteins 1 and 2 and DEF-B is a homodimer of packaging protein 1. This Homo sapiens (Human) protein is Packaging protein 1.